The primary structure comprises 127 residues: Probable soluble cytochrome b562 1 (127 aa).

The N-terminal stretch at 1-21 is a signal peptide; that stretch reads MRKIPIIAGVFSLLITSCTFA. Heme b-binding residues include M28 and H123.

The protein belongs to the cytochrome b562 family. Heme b is required as a cofactor.

The protein resides in the periplasm. In terms of biological role, electron-transport protein of unknown function. The polypeptide is Probable soluble cytochrome b562 1 (cybC1) (Yersinia pestis).